The following is a 259-amino-acid chain: Type III pantothenate kinase (259 aa).

9–16 (DAGNSRIK) contacts ATP. Substrate-binding positions include Tyr-93 and 100-103 (GSDR). Asp-102 functions as the Proton acceptor in the catalytic mechanism. Thr-126 is a binding site for ATP. Residue Thr-190 coordinates substrate.

Belongs to the type III pantothenate kinase family. Homodimer. NH4(+) is required as a cofactor. The cofactor is K(+).

The protein localises to the cytoplasm. It catalyses the reaction (R)-pantothenate + ATP = (R)-4'-phosphopantothenate + ADP + H(+). It participates in cofactor biosynthesis; coenzyme A biosynthesis; CoA from (R)-pantothenate: step 1/5. Its function is as follows. Catalyzes the phosphorylation of pantothenate (Pan), the first step in CoA biosynthesis. This Burkholderia pseudomallei (strain K96243) protein is Type III pantothenate kinase.